The chain runs to 60 residues: Large ribosomal subunit protein uL30 (60 aa).

Belongs to the universal ribosomal protein uL30 family. Part of the 50S ribosomal subunit.

The chain is Large ribosomal subunit protein uL30 from Leifsonia xyli subsp. xyli (strain CTCB07).